We begin with the raw amino-acid sequence, 309 residues long: UPF0282 protein Msed_0584 (309 aa).

The protein belongs to the UPF0282 family.

This is UPF0282 protein Msed_0584 from Metallosphaera sedula (strain ATCC 51363 / DSM 5348 / JCM 9185 / NBRC 15509 / TH2).